A 430-amino-acid chain; its full sequence is Serine hydroxymethyltransferase 1 (430 aa).

Residues L132 and G136–L138 each bind (6S)-5,6,7,8-tetrahydrofolate. An N6-(pyridoxal phosphate)lysine modification is found at K241.

This sequence belongs to the SHMT family. As to quaternary structure, homodimer. The cofactor is pyridoxal 5'-phosphate.

The protein localises to the cytoplasm. It carries out the reaction (6R)-5,10-methylene-5,6,7,8-tetrahydrofolate + glycine + H2O = (6S)-5,6,7,8-tetrahydrofolate + L-serine. Its pathway is one-carbon metabolism; tetrahydrofolate interconversion. It functions in the pathway amino-acid biosynthesis; glycine biosynthesis; glycine from L-serine: step 1/1. Functionally, catalyzes the reversible interconversion of serine and glycine with tetrahydrofolate (THF) serving as the one-carbon carrier. This reaction serves as the major source of one-carbon groups required for the biosynthesis of purines, thymidylate, methionine, and other important biomolecules. Also exhibits THF-independent aldolase activity toward beta-hydroxyamino acids, producing glycine and aldehydes, via a retro-aldol mechanism. This Bordetella parapertussis (strain 12822 / ATCC BAA-587 / NCTC 13253) protein is Serine hydroxymethyltransferase 1.